Consider the following 132-residue polypeptide: Small ribosomal subunit protein uS8 (132 aa).

The protein belongs to the universal ribosomal protein uS8 family. As to quaternary structure, part of the 30S ribosomal subunit. Contacts proteins S5 and S12.

In terms of biological role, one of the primary rRNA binding proteins, it binds directly to 16S rRNA central domain where it helps coordinate assembly of the platform of the 30S subunit. The chain is Small ribosomal subunit protein uS8 from Francisella tularensis subsp. tularensis (strain FSC 198).